The primary structure comprises 141 residues: Large ribosomal subunit protein uL23B (141 aa).

Residues 1–22 (MSVGKAKGAQKTVQKGIHNKVA) are disordered.

Belongs to the universal ribosomal protein uL23 family. Component of the large ribosomal subunit (LSU). Mature yeast ribosomes consist of a small (40S) and a large (60S) subunit. The 40S small subunit contains 1 molecule of ribosomal RNA (18S rRNA) and at least 33 different proteins. The large 60S subunit contains 3 rRNA molecules (25S, 5.8S and 5S rRNA) and at least 46 different proteins. uL23 is associated with the polypeptide exit tunnel.

The protein resides in the cytoplasm. This protein binds to a specific region on the 26S rRNA. Its function is as follows. Component of the ribosome, a large ribonucleoprotein complex responsible for the synthesis of proteins in the cell. The small ribosomal subunit (SSU) binds messenger RNAs (mRNAs) and translates the encoded message by selecting cognate aminoacyl-transfer RNA (tRNA) molecules. The large subunit (LSU) contains the ribosomal catalytic site termed the peptidyl transferase center (PTC), which catalyzes the formation of peptide bonds, thereby polymerizing the amino acids delivered by tRNAs into a polypeptide chain. The nascent polypeptides leave the ribosome through a tunnel in the LSU and interact with protein factors that function in enzymatic processing, targeting, and the membrane insertion of nascent chains at the exit of the ribosomal tunnel. uL23 is a major component of the universal docking site for these factors at the polypeptide exit tunnel. This is Large ribosomal subunit protein uL23B (rpl2502) from Schizosaccharomyces pombe (strain 972 / ATCC 24843) (Fission yeast).